The sequence spans 253 residues: Triosephosphate isomerase (253 aa).

9-11 (NWK) contacts substrate. His94 acts as the Electrophile in catalysis. Residue Glu163 is the Proton acceptor of the active site. Residues Gly169, Ser209, and 230 to 231 (GG) each bind substrate.

Belongs to the triosephosphate isomerase family. As to quaternary structure, homodimer.

It localises to the cytoplasm. It carries out the reaction D-glyceraldehyde 3-phosphate = dihydroxyacetone phosphate. Its pathway is carbohydrate biosynthesis; gluconeogenesis. The protein operates within carbohydrate degradation; glycolysis; D-glyceraldehyde 3-phosphate from glycerone phosphate: step 1/1. Functionally, involved in the gluconeogenesis. Catalyzes stereospecifically the conversion of dihydroxyacetone phosphate (DHAP) to D-glyceraldehyde-3-phosphate (G3P). This Dehalococcoides mccartyi (strain CBDB1) protein is Triosephosphate isomerase.